The chain runs to 125 residues: Prefoldin subunit beta (125 aa).

Belongs to the prefoldin subunit beta family. Heterohexamer of two alpha and four beta subunits.

It is found in the cytoplasm. In terms of biological role, molecular chaperone capable of stabilizing a range of proteins. Seems to fulfill an ATP-independent, HSP70-like function in archaeal de novo protein folding. This Sulfolobus acidocaldarius (strain ATCC 33909 / DSM 639 / JCM 8929 / NBRC 15157 / NCIMB 11770) protein is Prefoldin subunit beta.